We begin with the raw amino-acid sequence, 499 residues long: Pyruvate kinase 2 (499 aa).

Residue arginine 50 participates in substrate binding. Residues asparagine 52, serine 54, aspartate 84, and threonine 85 each coordinate K(+). 52–55 is a binding site for ATP; that stretch reads NFSH. Arginine 91 serves as a coordination point for ATP. Glutamate 241 is a Mg(2+) binding site. Positions 264, 265, and 297 each coordinate substrate. Aspartate 265 provides a ligand contact to Mg(2+).

This sequence belongs to the pyruvate kinase family. As to quaternary structure, homotetramer. Mg(2+) serves as cofactor. Requires K(+) as cofactor.

The catalysed reaction is pyruvate + ATP = phosphoenolpyruvate + ADP + H(+). It participates in carbohydrate degradation; glycolysis; pyruvate from D-glyceraldehyde 3-phosphate: step 5/5. Activated by fructose 2,6-bisphosphate, activated by the effector in a cooperative manner. In Trypanosoma brucei brucei, this protein is Pyruvate kinase 2 (PYK2).